Reading from the N-terminus, the 476-residue chain is Splicing factor ESS-2 homolog (476 aa).

Residue M1 is modified to N-acetylmethionine. The segment covering 1-18 has biased composition (low complexity); sequence METPGASASSLLLPAASR. 2 disordered regions span residues 1–36 and 91–148; these read METPGASASSLLLPAASRPPRKREAGEAGAATSKQR and LGKM…LPSL. Residue T3 is modified to Phosphothreonine. Residues 133-142 are compositionally biased toward acidic residues; that stretch reads DGEAGEEEEK. K142 is covalently cross-linked (Glycyl lysine isopeptide (Lys-Gly) (interchain with G-Cter in SUMO2)). S292 is modified (phosphoserine). Residue T386 is modified to Phosphothreonine. Residues S391 and S395 each carry the phosphoserine modification. The interval 413-465 is disordered; that stretch reads ALRASYTPSPARSTHLKTPASGLQTPTSTPAPGSATRTPLTQDPASITDNLLQ. Positions 437–451 are enriched in low complexity; sequence TPTSTPAPGSATRTP. Residues 452-463 are compositionally biased toward polar residues; sequence LTQDPASITDNL.

This sequence belongs to the ESS2 family. Identified in the spliceosome C complex. Interacts with FRA10AC1. In terms of tissue distribution, highly expressed in heart, brain and skeletal muscle. Detected at low levels in placenta.

The protein resides in the nucleus. May be involved in pre-mRNA splicing. This is Splicing factor ESS-2 homolog from Homo sapiens (Human).